The sequence spans 478 residues: PRAME family member 11 (478 aa).

The LRR 1; degenerate repeat unit spans residues 99-126 (RWKLQVLDLQDVCENFWMVWSEAMAHGC). The stretch at 181–205 (HLCCKKLKILGMPFRNIRSILKMVN) is one LRR 2; degenerate repeat. The stretch at 206–232 (LDCIQEVEVNCKWILPILTQFTPYLGH) is one LRR 3; degenerate repeat. An LRR 4; degenerate repeat occupies 233-268 (LRNLQKLVLSHMDVSRYVSPEQKKEIVTQFTTQFLK). 5 LRR repeats span residues 269 to 294 (LRCL…LSCL), 295 to 326 (KTSL…SQLK), 327 to 347 (TLDL…QILL), 351 to 378 (AATL…ALSR), and 379 to 403 (CFEL…LLSH).

Belongs to the PRAME family.

In Homo sapiens (Human), this protein is PRAME family member 11.